Reading from the N-terminus, the 178-residue chain is Probable DNA-directed RNA polymerase subunit delta (178 aa).

Residues 14 to 81 (LSLIDVAHFI…GNNTWGLRAW (68 aa)) enclose the HTH HARE-type domain. Disordered stretches follow at residues 88–122 (DEEV…DYDD) and 141–178 (LDED…PEDK). Composition is skewed to acidic residues over residues 105 to 122 (DDED…DYDD), 141 to 150 (LDEDEDDDDH), and 161 to 178 (TVED…PEDK).

This sequence belongs to the RpoE family. In terms of assembly, RNAP is composed of a core of 2 alpha, a beta and a beta' subunits. The core is associated with a delta subunit and one of several sigma factors.

Functionally, participates in both the initiation and recycling phases of transcription. In the presence of the delta subunit, RNAP displays an increased specificity of transcription, a decreased affinity for nucleic acids, and an increased efficiency of RNA synthesis because of enhanced recycling. In Listeria monocytogenes serovar 1/2a (strain ATCC BAA-679 / EGD-e), this protein is Probable DNA-directed RNA polymerase subunit delta.